Reading from the N-terminus, the 104-residue chain is Large ribosomal subunit protein uL24 (104 aa).

Belongs to the universal ribosomal protein uL24 family. In terms of assembly, part of the 50S ribosomal subunit.

One of two assembly initiator proteins, it binds directly to the 5'-end of the 23S rRNA, where it nucleates assembly of the 50S subunit. Functionally, one of the proteins that surrounds the polypeptide exit tunnel on the outside of the subunit. This Afipia carboxidovorans (strain ATCC 49405 / DSM 1227 / KCTC 32145 / OM5) (Oligotropha carboxidovorans) protein is Large ribosomal subunit protein uL24.